A 344-amino-acid polypeptide reads, in one-letter code: N-acetyl-gamma-glutamyl-phosphate reductase (344 aa).

Cysteine 150 is a catalytic residue.

This sequence belongs to the NAGSA dehydrogenase family. Type 1 subfamily.

It localises to the cytoplasm. The catalysed reaction is N-acetyl-L-glutamate 5-semialdehyde + phosphate + NADP(+) = N-acetyl-L-glutamyl 5-phosphate + NADPH + H(+). It functions in the pathway amino-acid biosynthesis; L-arginine biosynthesis; N(2)-acetyl-L-ornithine from L-glutamate: step 3/4. Catalyzes the NADPH-dependent reduction of N-acetyl-5-glutamyl phosphate to yield N-acetyl-L-glutamate 5-semialdehyde. This chain is N-acetyl-gamma-glutamyl-phosphate reductase, found in Pseudomonas putida (strain ATCC 700007 / DSM 6899 / JCM 31910 / BCRC 17059 / LMG 24140 / F1).